The primary structure comprises 202 residues: MFITFEGIDGSGKTTQSRLLTEYLSGVYGVDNVILTREPGGTFFNESVRNLLFSTKNLDKLSELLFFIAMRREHFMKVIKPALTQQKIVICDRFIDSTIAYQGYGHGIDCKLIEELNDLVVDIYPNITFVLDSDINQSVARSNKNGYEFLDLEFYARVRDGFRDIVKRNQYRCYLITNVDATKNINEISAIYLKTIKILHAL.

ATP is bound at residue 7–14 (GIDGSGKT).

It belongs to the thymidylate kinase family.

The enzyme catalyses dTMP + ATP = dTDP + ADP. Phosphorylation of dTMP to form dTDP in both de novo and salvage pathways of dTTP synthesis. The chain is Thymidylate kinase from Ehrlichia ruminantium (strain Gardel).